Reading from the N-terminus, the 378-residue chain is MVTLMNTYGDMFRVTVFGESHGKAVGAVVDGCPANLPLSEEDIQKELDRRRPGQSIFSTPRKEEDKVEILSGIFEGKTTGAPICSIVYNKNMRPKDYSKIKDTPRPGHADLTYRLKYKNYDYRGGGRASGRVTIGHVIGGAIAKKLLSYTYNIKIIGYTIKIGKIEGDFSYYKNPEVFENEKSLERLIEIIESNPLRCPSMNEKEMEEYVLKAMENKDSVGGVVEIVALNVPVGVGNPIFNKLNGELARALMSINAVKGVEIGAGFKAAEMYGSEMNDEMYFDDDKNIRFKTNNCGGILGGISCGTPIVLRIAVKPTPSIGKKQKTINLKTLENVEIEIEGRHDPVIVPRIVPVAEAMVAITLADLMIKGGFIHPCSL.

Arg-50 serves as a coordination point for NADP(+). FMN-binding positions include 127 to 129 (RAS), 255 to 256 (NA), Gly-300, 315 to 319 (KPTPS), and Arg-342.

This sequence belongs to the chorismate synthase family. The cofactor is FMNH2.

The enzyme catalyses 5-O-(1-carboxyvinyl)-3-phosphoshikimate = chorismate + phosphate. Its pathway is metabolic intermediate biosynthesis; chorismate biosynthesis; chorismate from D-erythrose 4-phosphate and phosphoenolpyruvate: step 7/7. Functionally, catalyzes the anti-1,4-elimination of the C-3 phosphate and the C-6 proR hydrogen from 5-enolpyruvylshikimate-3-phosphate (EPSP) to yield chorismate, which is the branch point compound that serves as the starting substrate for the three terminal pathways of aromatic amino acid biosynthesis. This reaction introduces a second double bond into the aromatic ring system. This Methanocaldococcus jannaschii (strain ATCC 43067 / DSM 2661 / JAL-1 / JCM 10045 / NBRC 100440) (Methanococcus jannaschii) protein is Chorismate synthase.